The chain runs to 41 residues: Maticotoxin A (41 aa).

2 cysteine pairs are disulfide-bonded: C3–C22 and C15–C39.

This sequence belongs to the three-finger toxin family. Short-chain subfamily. Expressed by the venom gland.

It localises to the secreted. The protein is Maticotoxin A of Calliophis bivirgatus (Blue Malaysian coral snake).